A 281-amino-acid chain; its full sequence is Release factor glutamine methyltransferase (281 aa).

Residues E141 and N185 each contribute to the S-adenosyl-L-methionine site. 185–188 (NPPY) contributes to the substrate binding site.

The protein belongs to the protein N5-glutamine methyltransferase family. PrmC subfamily.

The catalysed reaction is L-glutaminyl-[peptide chain release factor] + S-adenosyl-L-methionine = N(5)-methyl-L-glutaminyl-[peptide chain release factor] + S-adenosyl-L-homocysteine + H(+). Methylates the class 1 translation termination release factors RF1/PrfA and RF2/PrfB on the glutamine residue of the universally conserved GGQ motif. The sequence is that of Release factor glutamine methyltransferase from Mycolicibacterium smegmatis (strain ATCC 700084 / mc(2)155) (Mycobacterium smegmatis).